The primary structure comprises 832 residues: MAMRSGRHPSLLLLLVLLLWLLQVSIIDSVQQETDDLTKQTKEKIYQPLRRSKRRWVITTLELEEEDPGPFPKLIGELFNNMSYNMSLMYLISGPGVDEYPEIGLFSLEDHENGRIYVHRPVDREMTPSFTVYFDVVERSTGKIVDTSLIFNIRISDVNDHAPQFPEKEFNITVQENQSAGQPIFQMLAVDLDEENTPNSQVLYFLISQTPLLKESGFRVDRLSGEIRLSGCLDYETAPQFTLLIRARDCGEPSLSSTTTVHVDVQEGNNHRPAFTQENYKVQIPEGRASQGVLRLLVQDRDSPFTSAWRAKFNILHGNEEGHFDISTDPETNEGILNVIKPLDYETRPAQSLIIVVENEERLVFCERGKLQPPRKAAASATVSVQVTDANDPPAFHPQSFIVNKEEGARPGTLLGTFNAMDPDSQIRYELVHDPANWVSVDKNSGVVITVEPIDRESPHVNNSFYVIIIHAVDDGFPPQTATGTLMLFLSDINDNVPTLRPRSRYMEVCESAVHEPLHIEAEDPDLEPFSDPFTFELDNTWGNAEDTWKLGRNWGQSVELLTLRSLPRGNYLVPLFIGDKQGLSQKQTVHVRICPCASGLTCVELADAEVGLHVGALFPVCAAFVALAVALLFLLRCYFVLEPKRHGCSVSNDEGHQTLVMYNAESKGTSAQTWSDVEGQRPALLICTAAAGPTQGVKDLEEVPPSAASQSAQARCALGSWGYGKPFEPRSVKNIHSTPAYPDATMHRQLLAPVEGRMAETLNQKLHVANVLEDDPGYLPHVYSEEGECGGAPSLSSLASLEQELQPDLLDSLGSKATPFEEIYSESGVPS.

The signal sequence occupies residues 1–27; sequence MAMRSGRHPSLLLLLVLLLWLLQVSII. Over 28–614 the chain is Extracellular; the sequence is DSVQQETDDL…ELADAEVGLH (587 aa). 4 consecutive Cadherin domains span residues 35 to 165, 166 to 275, 276 to 396, and 397 to 500; these read DDLT…APQF, PEKE…RPAF, TQEN…PPAF, and HPQS…VPTL. 4 N-linked (GlcNAc...) asparagine glycosylation sites follow: Asn-81, Asn-85, Asn-171, and Asn-177. Asn-462 carries N-linked (GlcNAc...) asparagine glycosylation. A helical membrane pass occupies residues 615-635; that stretch reads VGALFPVCAAFVALAVALLFL. Over 636 to 832 the chain is Cytoplasmic; sequence LRCYFVLEPK…EIYSESGVPS (197 aa). The tract at residues 813-832 is disordered; that stretch reads SLGSKATPFEEIYSESGVPS.

Homodimer. Component of a cadherin:catenin adhesion complex composed of at least of CDH26, beta-catenin/CTNNB1, alpha-catenin/CTNNA1 and p120 catenin/CTNND1. Post-translationally, N-glycosylated. In terms of tissue distribution, expressed by epithelial cells of gastrointestinal tissue.

The protein localises to the cell membrane. Its function is as follows. Cadherins are calcium-dependent cell adhesion proteins. They preferentially interact with themselves in a homophilic manner in connecting cells; cadherins may thus contribute to the sorting of heterogeneous cell types. Ligand for integrins alpha-E/beta-7, ITGAE:ITGAB7, alpha-4/beta-7, ITGA4:ITGAB7 and alpha-4/beta-1, ITGA4:ITGAB1 through which modulates CD4(+) T cells activation. The polypeptide is Cadherin-like protein 26 (CDH26) (Homo sapiens (Human)).